We begin with the raw amino-acid sequence, 621 residues long: ATP-dependent lipid A-core flippase (621 aa).

Transmembrane regions (helical) follow at residues 32–52 (IVAA…LAAF), 91–111 (VWGT…LVVI), 192–212 (IVLL…FPLL), 286–306 (SPFS…IALW), and 312–332 (YTTI…YAPI). The region spanning 33 to 344 (VAALIAIFGV…LANISIPMQT (312 aa)) is the ABC transmembrane type-1 domain. In terms of domain architecture, ABC transporter spans 378–611 (FRNVDVEYRS…NGYYTMLRNI (234 aa)). 410–417 (GRSGSGKS) is a binding site for ATP.

It belongs to the ABC transporter superfamily. Lipid exporter (TC 3.A.1.106) family. Homodimer.

The protein localises to the cell inner membrane. It carries out the reaction ATP + H2O + lipid A-core oligosaccharideSide 1 = ADP + phosphate + lipid A-core oligosaccharideSide 2.. Involved in lipopolysaccharide (LPS) biosynthesis. Translocates lipid A-core from the inner to the outer leaflet of the inner membrane. Transmembrane domains (TMD) form a pore in the inner membrane and the ATP-binding domain (NBD) is responsible for energy generation. The chain is ATP-dependent lipid A-core flippase from Neisseria meningitidis serogroup A / serotype 4A (strain DSM 15465 / Z2491).